We begin with the raw amino-acid sequence, 374 residues long: Chaperone protein DnaJ (374 aa).

The 65-residue stretch at 4-68 (DYYDILGVSR…QMRGRYDQFG (65 aa)) folds into the J domain. The CR-type zinc-finger motif lies at 133 to 215 (GGEQQIRISH…CGGRGQNQVS (83 aa)). Zn(2+) contacts are provided by cysteine 146, cysteine 149, cysteine 163, cysteine 166, cysteine 189, cysteine 192, cysteine 203, and cysteine 206. CXXCXGXG motif repeat units follow at residues 146–153 (CKTCEGTG), 163–170 (CSTCQGSG), 189–196 (CPTCNGQG), and 203–210 (CDSCGGRG).

The protein belongs to the DnaJ family. As to quaternary structure, homodimer. Zn(2+) serves as cofactor.

Its subcellular location is the cytoplasm. Participates actively in the response to hyperosmotic and heat shock by preventing the aggregation of stress-denatured proteins and by disaggregating proteins, also in an autonomous, DnaK-independent fashion. Unfolded proteins bind initially to DnaJ; upon interaction with the DnaJ-bound protein, DnaK hydrolyzes its bound ATP, resulting in the formation of a stable complex. GrpE releases ADP from DnaK; ATP binding to DnaK triggers the release of the substrate protein, thus completing the reaction cycle. Several rounds of ATP-dependent interactions between DnaJ, DnaK and GrpE are required for fully efficient folding. Also involved, together with DnaK and GrpE, in the DNA replication of plasmids through activation of initiation proteins. In Acaryochloris marina (strain MBIC 11017), this protein is Chaperone protein DnaJ.